Reading from the N-terminus, the 260-residue chain is Trialysin (260 aa).

Positions Met-1–Ser-19 are cleaved as a signal peptide. The propeptide at Tyr-20–Arg-55 is removed in mature form, probably by the serine protease triapsin.

This sequence belongs to the redulysin-like family. As to expression, expressed in salivary glands.

The protein localises to the secreted. Its subcellular location is the target cell membrane. Its function is as follows. Pore-forming protein that induces lysis of T.cruzi trypomastigotes, bacteria E.coli and human red blood cells. The parasite lysis is much more important than the hemolysis, probably due to difference in membrane composition. Its action on protozoan parasites and bacteria may indicate a role in the control of microorganism growth in the salivary glands. The chain is Trialysin from Triatoma infestans (Assassin bug).